The primary structure comprises 148 residues: 3-dehydroquinate dehydratase (148 aa).

Y23 functions as the Proton acceptor in the catalytic mechanism. N75, H81, and D88 together coordinate substrate. The active-site Proton donor is the H101. Residues 102-103 (LS) and R112 each bind substrate.

The protein belongs to the type-II 3-dehydroquinase family. In terms of assembly, homododecamer.

It carries out the reaction 3-dehydroquinate = 3-dehydroshikimate + H2O. Its pathway is metabolic intermediate biosynthesis; chorismate biosynthesis; chorismate from D-erythrose 4-phosphate and phosphoenolpyruvate: step 3/7. Its function is as follows. Catalyzes a trans-dehydration via an enolate intermediate. This is 3-dehydroquinate dehydratase from Xanthomonas axonopodis pv. citri (strain 306).